We begin with the raw amino-acid sequence, 211 residues long: tRNA (pseudouridine(54)-N(1))-methyltransferase (211 aa).

S-adenosyl-L-methionine-binding residues include Leu-128, Gly-150, and Cys-183.

Belongs to the methyltransferase superfamily. TrmY family. Homodimer.

It is found in the cytoplasm. It carries out the reaction pseudouridine(54) in tRNA + S-adenosyl-L-methionine = N(1)-methylpseudouridine(54) in tRNA + S-adenosyl-L-homocysteine + H(+). Functionally, specifically catalyzes the N1-methylation of pseudouridine at position 54 (Psi54) in tRNAs. This chain is tRNA (pseudouridine(54)-N(1))-methyltransferase, found in Methanosarcina mazei (strain ATCC BAA-159 / DSM 3647 / Goe1 / Go1 / JCM 11833 / OCM 88) (Methanosarcina frisia).